Reading from the N-terminus, the 92-residue chain is Actobindin-A (92 aa).

2 disordered regions span residues 1 to 33 (MSAP…IGSD) and 54 to 92 (LKHA…AADS). WH2 domains are found at residues 3-20 (APNP…LKHT) and 40-57 (DHAS…LKHA). 2 stretches are compositionally biased toward basic and acidic residues: residues 13 to 33 (KGAD…IGSD) and 54 to 64 (LKHAETDDKSA). The span at 68 to 79 (NENTTIKPNNHS) shows a compositional bias: polar residues.

Monomer.

Functionally, is able to bind two actin monomers at high concentrations of G-actin. Inhibits actin polymerization by sequestering G-actin and stabilizing actin dimers. In Dictyostelium discoideum (Social amoeba), this protein is Actobindin-A (abnA).